Here is a 232-residue protein sequence, read N- to C-terminus: tRNA (guanine-N(1)-)-methyltransferase (232 aa).

Residues Gly112 and 132–137 each bind S-adenosyl-L-methionine; that span reads IGDYIL.

This sequence belongs to the RNA methyltransferase TrmD family. Homodimer.

Its subcellular location is the cytoplasm. The enzyme catalyses guanosine(37) in tRNA + S-adenosyl-L-methionine = N(1)-methylguanosine(37) in tRNA + S-adenosyl-L-homocysteine + H(+). Its function is as follows. Specifically methylates guanosine-37 in various tRNAs. The sequence is that of tRNA (guanine-N(1)-)-methyltransferase from Methylacidiphilum infernorum (isolate V4) (Methylokorus infernorum (strain V4)).